A 263-amino-acid polypeptide reads, in one-letter code: Microtubule-associated protein RP/EB family member 1 (263 aa).

Residues 14 to 116 (NLSRHDMLAW…FVQWFKKFFD (103 aa)) form the Calponin-homology (CH) domain. Residues 150–182 (KPLGTGSAGPQRPIVAQRTPATPKGGTGMVKKA) form a disordered region. The region spanning 180 to 250 (KKAAGDDESA…LYATDEGFVI (71 aa)) is the EB1 C-terminal domain.

This sequence belongs to the MAPRE family.

Its subcellular location is the cytoplasm. The protein resides in the cytoskeleton. It localises to the microtubule organizing center. The protein localises to the centrosome. It is found in the golgi apparatus. Its subcellular location is the spindle. The protein resides in the spindle pole. Plus-end tracking protein (+TIP) that binds to the plus-end of microtubules and regulates the dynamics of the microtubule cytoskeleton. Promotes cytoplasmic microtubule nucleation and elongation. Involved in mitotic spindle positioning by stabilizing microtubules and promoting dynamic connection between astral microtubules and the cortex during mitotic chromosome segregation. This Coturnix japonica (Japanese quail) protein is Microtubule-associated protein RP/EB family member 1 (MAPRE1).